The following is a 161-amino-acid chain: Cyclic pyranopterin monophosphate synthase (161 aa).

Substrate contacts are provided by residues 75 to 77 (MCH) and 115 to 116 (ME). Asp-130 is a catalytic residue.

The protein belongs to the MoaC family. In terms of assembly, homohexamer; trimer of dimers.

The catalysed reaction is (8S)-3',8-cyclo-7,8-dihydroguanosine 5'-triphosphate = cyclic pyranopterin phosphate + diphosphate. The protein operates within cofactor biosynthesis; molybdopterin biosynthesis. Its function is as follows. Catalyzes the conversion of (8S)-3',8-cyclo-7,8-dihydroguanosine 5'-triphosphate to cyclic pyranopterin monophosphate (cPMP). In Bacillus cereus (strain ATCC 10987 / NRS 248), this protein is Cyclic pyranopterin monophosphate synthase.